A 623-amino-acid polypeptide reads, in one-letter code: MKQPNRKRKLNMDSKERLDQDGRLEQAEEEKKPKDSTTPLSHVPSAAAQGAWSWEWYLKEQKAVAAPVELFSKDQSFPEHENGFQIGMRLEGIDPRHPSVFCVLSVAEVCGYRLRLHFDGYLSCYDFWTNAGSPDIHPVGWCEKTKHELHIPKGYRKDKFVWMDYLKACKLQNAPKKLFRNRSPNGPMSKEFQVGMKLEAVDRKNPSLVCVATIADIVEDRLLVHFDNWDDSYDYWCDVNSPYVQPVGWCQENGRTLIAPQGYPNPENFSWTEYLEATQTNAVPAKVFKMRLPHGFLPNMKLEVVDKRNPRLIRVATIVDVDDQRVKVHFDGWDHKYDYWVEADSPDIHPIGWCDVTGHPLEVPQRTNDLKILPGQAVCPTPGCRGIGHIRGPRYSGHHSAFGCPYSDMNLKKEATLHDRLREQTQANLESDSSHSKSKSLCSLNFNGKHEKVNSQPRLVQQAKCLKIKGKEDIDLDNLFRVLVLHPRGLEYSVEQAQQVLHQSVSMSTVSAHPFRDLPLGREQHCKLLPGVADIRASQVARWTVDEVAEFVQSLLGCEEHAKCFKKEQIDGKAFLLLTQTDIVKVMKIKLGPALKIYNSILMFRHSQELPEEDIASGQEVRG.

The disordered stretch occupies residues 1 to 44 (MKQPNRKRKLNMDSKERLDQDGRLEQAEEEKKPKDSTTPLSHVP). The span at 10–35 (LNMDSKERLDQDGRLEQAEEEKKPKD) shows a compositional bias: basic and acidic residues. MBT repeat units follow at residues 52–152 (WSWE…LHIP), 160–260 (FVWM…LIAP), and 269–364 (FSWT…LEVP). The CCHHC-type zinc finger occupies 370-414 (LKILPGQAVCPTPGCRGIGHIRGPRYSGHHSAFGCPYSDMNLKKE). The Zn(2+) site is built by cysteine 379, cysteine 384, histidine 398, and cysteine 404. The region spanning 543 to 607 (WTVDEVAEFV…YNSILMFRHS (65 aa)) is the SAM domain.

The protein localises to the nucleus. Functionally, putative Polycomb group (PcG) protein. PcG proteins maintain the transcriptionally repressive state of genes, probably via a modification of chromatin, rendering it heritably changed in its expressibility. This Homo sapiens (Human) protein is Lethal(3)malignant brain tumor-like protein 4 (L3MBTL4).